We begin with the raw amino-acid sequence, 143 residues long: Sirohydrochlorin cobaltochelatase (143 aa).

Residue histidine 18 is the Proton acceptor of the active site. Residue histidine 18 participates in Co(2+) binding. Histidine 18 is a Ni(2+) binding site. Substrate is bound by residues arginine 53 and 78 to 83 (LAHGVH). A Co(2+)-binding site is contributed by histidine 83. Histidine 83 is a Ni(2+) binding site.

This sequence belongs to the CbiX family. CbiXS subfamily. In terms of assembly, homotetramer; dimer of dimers.

The enzyme catalyses Co-sirohydrochlorin + 2 H(+) = sirohydrochlorin + Co(2+). The catalysed reaction is Ni-sirohydrochlorin + 2 H(+) = sirohydrochlorin + Ni(2+). It participates in cofactor biosynthesis; adenosylcobalamin biosynthesis; cob(II)yrinate a,c-diamide from sirohydrochlorin (anaerobic route): step 1/10. Catalyzes the insertion of Co(2+) into sirohydrochlorin as part of the anaerobic pathway to cobalamin biosynthesis. Involved in the biosynthesis of the unique nickel-containing tetrapyrrole coenzyme F430, the prosthetic group of methyl-coenzyme M reductase (MCR), which plays a key role in methanogenesis and anaerobic methane oxidation (Potential). Catalyzes the insertion of Ni(2+) into sirohydrochlorin to yield Ni-sirohydrochlorin (Potential). The sequence is that of Sirohydrochlorin cobaltochelatase from Methanothermobacter thermautotrophicus (strain ATCC 29096 / DSM 1053 / JCM 10044 / NBRC 100330 / Delta H) (Methanobacterium thermoautotrophicum).